We begin with the raw amino-acid sequence, 91 residues long: DNA-directed RNA polymerase subunit omega (91 aa).

This sequence belongs to the RNA polymerase subunit omega family. In terms of assembly, the RNAP catalytic core consists of 2 alpha, 1 beta, 1 beta' and 1 omega subunit. When a sigma factor is associated with the core the holoenzyme is formed, which can initiate transcription.

It catalyses the reaction RNA(n) + a ribonucleoside 5'-triphosphate = RNA(n+1) + diphosphate. Functionally, promotes RNA polymerase assembly. Latches the N- and C-terminal regions of the beta' subunit thereby facilitating its interaction with the beta and alpha subunits. The polypeptide is DNA-directed RNA polymerase subunit omega (Erwinia tasmaniensis (strain DSM 17950 / CFBP 7177 / CIP 109463 / NCPPB 4357 / Et1/99)).